A 379-amino-acid chain; its full sequence is Proton extrusion protein PxcA (379 aa).

Helical transmembrane passes span 153–173, 254–274, 300–320, and 337–357; these read TLVS…LQQI, AIKN…VCLF, FVII…GWTV, and FIDL…KYWI.

It belongs to the CemA family.

The protein localises to the cell inner membrane. Required for H(+) efflux immediately after light irradiation to form a rapid H(+) concentration gradient across the thylakoid membranes. Together with PxcL, contributes to transient H(+) uptake following dark to light transition. The protein is Proton extrusion protein PxcA of Synechococcus sp. (strain RCC307).